The chain runs to 133 residues: Small ribosomal subunit protein uS9 (133 aa).

A disordered region spans residues 94–133; the sequence is SADNRKPLKTEGHLSRDPRAKERRKYGLKKARKAPQFSKR. Residues 95–113 show a composition bias toward basic and acidic residues; sequence ADNRKPLKTEGHLSRDPRA. Positions 114–133 are enriched in basic residues; the sequence is KERRKYGLKKARKAPQFSKR.

This sequence belongs to the universal ribosomal protein uS9 family.

This is Small ribosomal subunit protein uS9 from Synechococcus sp. (strain CC9605).